Here is a 199-residue protein sequence, read N- to C-terminus: Recombination protein RecR (199 aa).

The C4-type zinc-finger motif lies at 56-71 (CQRCNTFTEGDICERC). In terms of domain architecture, Toprim spans 79–174 (ELLCVVETPV…GVTRIARGVP (96 aa)).

Belongs to the RecR family.

Functionally, may play a role in DNA repair. It seems to be involved in an RecBC-independent recombinational process of DNA repair. It may act with RecF and RecO. The protein is Recombination protein RecR of Dechloromonas aromatica (strain RCB).